Reading from the N-terminus, the 229-residue chain is Potassium/proton antiporter CemA (229 aa).

A run of 4 helical transmembrane segments spans residues phenylalanine 7–phenylalanine 27, isoleucine 114–leucine 134, isoleucine 154–isoleucine 174, and isoleucine 189–isoleucine 209.

Belongs to the CemA family.

It is found in the plastid. It localises to the chloroplast inner membrane. The enzyme catalyses K(+)(in) + H(+)(out) = K(+)(out) + H(+)(in). Contributes to K(+)/H(+) antiport activity by supporting proton efflux to control proton extrusion and homeostasis in chloroplasts in a light-dependent manner to modulate photosynthesis. Prevents excessive induction of non-photochemical quenching (NPQ) under continuous-light conditions. Indirectly promotes efficient inorganic carbon uptake into chloroplasts. The chain is Potassium/proton antiporter CemA from Platanus occidentalis (Sycamore).